The primary structure comprises 390 residues: F-box/kelch-repeat protein At3g04660 (390 aa).

The F-box domain maps to Tyr18–Arg67. Kelch repeat units lie at residues Phe115–Asp161 and Met272–Val323.

Part of a SCF (ASK-cullin-F-box) protein ligase complex. Interacts with SKP1A/ASK1, SKP1B/ASK2, ASK11 and ASK13.

It localises to the nucleus. It participates in protein modification; protein ubiquitination. Functionally, component of SCF(ASK-cullin-F-box) E3 ubiquitin ligase complexes, which may mediate the ubiquitination and subsequent proteasomal degradation of target proteins. This Arabidopsis thaliana (Mouse-ear cress) protein is F-box/kelch-repeat protein At3g04660.